The sequence spans 243 residues: Carboxy-S-adenosyl-L-methionine synthase (243 aa).

Residues Tyr39, 64-66 (GCS), 90-91 (DN), 118-119 (DL), Asn133, and Arg200 contribute to the S-adenosyl-L-methionine site.

This sequence belongs to the class I-like SAM-binding methyltransferase superfamily. Cx-SAM synthase family. Homodimer.

The catalysed reaction is prephenate + S-adenosyl-L-methionine = carboxy-S-adenosyl-L-methionine + 3-phenylpyruvate + H2O. In terms of biological role, catalyzes the conversion of S-adenosyl-L-methionine (SAM) to carboxy-S-adenosyl-L-methionine (Cx-SAM). The sequence is that of Carboxy-S-adenosyl-L-methionine synthase from Idiomarina loihiensis (strain ATCC BAA-735 / DSM 15497 / L2-TR).